The primary structure comprises 131 residues: D-ribose pyranase (131 aa).

Catalysis depends on histidine 20, which acts as the Proton donor. Residues aspartate 28, histidine 98, and 120–122 each bind substrate; that span reads YAN.

This sequence belongs to the RbsD / FucU family. RbsD subfamily. As to quaternary structure, homodecamer.

Its subcellular location is the cytoplasm. It carries out the reaction beta-D-ribopyranose = beta-D-ribofuranose. The protein operates within carbohydrate metabolism; D-ribose degradation; D-ribose 5-phosphate from beta-D-ribopyranose: step 1/2. In terms of biological role, catalyzes the interconversion of beta-pyran and beta-furan forms of D-ribose. The polypeptide is D-ribose pyranase (Bacillus cereus (strain ATCC 14579 / DSM 31 / CCUG 7414 / JCM 2152 / NBRC 15305 / NCIMB 9373 / NCTC 2599 / NRRL B-3711)).